The following is a 676-amino-acid chain: Envelope glycoprotein (676 aa).

Positions Met1–Ser34 are cleaved as a signal peptide. The tract at residues Ala35 to Pro270 is receptor-binding domain (RBD). Topologically, residues Ala35–Leu620 are extracellular. A glycan (N-linked (GlcNAc...) asparagine; by host) is linked at Asn46. Intrachain disulfides connect Cys80–Cys132, Cys106–Cys121, Cys107–Cys117, Cys155–Cys175, and Cys167–Cys180. His89 lines the Zn(2+) pocket. Asp120 contributes to the Zn(2+) binding site. N-linked (GlcNAc...) asparagine; by host glycosylation occurs at Asn202. An intrachain disulfide couples Cys212 to Cys218. The disordered stretch occupies residues Asn287–Asp322. Over residues Lys294–Pro308 the composition is skewed to low complexity. Pro residues predominate over residues Ser309 to Ala318. Asn336 carries an N-linked (GlcNAc...) asparagine; by host glycan. 6 disulfides stabilise this stretch: Cys346–Cys349, Cys346–Cys573, Cys376–Cys430, Cys395–Cys407, Cys437–Cys450, and Cys565–Cys572. The CXXC motif lies at Cys346–Cys349. N-linked (GlcNAc...) asparagine; by host glycosylation is found at Asn368 and Asn375. 2 N-linked (GlcNAc...) asparagine; by host glycosylation sites follow: Asn408 and Asn444. A fusion peptide region spans residues Val482–Val502. Residues Gln513–Val547 adopt a coiled-coil conformation. Positions Leu548–Leu564 are immunosuppression. Residues Cys565–Cys573 carry the CX6CC motif. Residues Ile621–Ile641 traverse the membrane as a helical segment. Cys640 carries the S-palmitoyl cysteine; by host lipid modification. At Leu642–Gln676 the chain is on the cytoplasmic side. Residues Tyr665–Leu668 carry the YXXL motif; contains endocytosis signal motif.

As to quaternary structure, the mature envelope protein (Env) consists of a trimer of SU-TM heterodimers attached by a labile interchain disulfide bond. Post-translationally, specific enzymatic cleavages in vivo yield mature proteins. Envelope glycoproteins are synthesized as an inactive precursor that is N-glycosylated and processed likely by host cell furin or by a furin-like protease in the Golgi to yield the mature SU and TM proteins. The cleavage site between SU and TM requires the minimal sequence [KR]-X-[KR]-R. The R-peptide is released from the C-terminus of the cytoplasmic tail of the TM protein upon particle formation as a result of proteolytic cleavage by the viral protease. Cleavage of this peptide is required for TM to become fusogenic. The CXXC motif is highly conserved across a broad range of retroviral envelope proteins. It is thought to participate in the formation of a labile disulfide bond possibly with the CX6CC motif present in the transmembrane protein. Isomerization of the intersubunit disulfide bond to an SU intrachain disulfide bond is thought to occur upon receptor recognition in order to allow membrane fusion. In terms of processing, the transmembrane protein is palmitoylated. Post-translationally, the R-peptide is palmitoylated.

The protein localises to the virion membrane. It localises to the host cell membrane. Its function is as follows. The surface protein (SU) attaches the virus to the host cell by binding to its receptor. This interaction triggers the refolding of the transmembrane protein (TM) and is thought to activate its fusogenic potential by unmasking its fusion peptide. Fusion occurs at the host cell plasma membrane. The transmembrane protein (TM) acts as a class I viral fusion protein. Under the current model, the protein has at least 3 conformational states: pre-fusion native state, pre-hairpin intermediate state, and post-fusion hairpin state. During viral and target cell membrane fusion, the coiled coil regions (heptad repeats) assume a trimer-of-hairpins structure, positioning the fusion peptide in close proximity to the C-terminal region of the ectodomain. The formation of this structure appears to drive apposition and subsequent fusion of viral and target cell membranes. Membranes fusion leads to delivery of the nucleocapsid into the cytoplasm. In Mus musculus (Mouse), this protein is Envelope glycoprotein (env).